Reading from the N-terminus, the 380-residue chain is Interleukin-13 receptor subunit alpha-2 (380 aa).

Residues 1–26 (MAFVCLAIGCLYTFLISTTFGCTSSS) form the signal peptide. The Extracellular portion of the chain corresponds to 27–343 (DTEIKVNPPQ…EDLSKKTLLR (317 aa)). Fibronectin type-III domains lie at 34–134 (PPQD…SPQG), 139–235 (KVQD…LQNI), and 240–333 (PPVY…CWEG). Cys65 and Cys113 are disulfide-bonded. N-linked (GlcNAc...) asparagine glycosylation occurs at Asn115. 2 disulfide bridges follow: Cys145–Cys155 and Cys184–Cys197. N-linked (GlcNAc...) asparagine glycans are attached at residues Asn215, Asn290, and Asn299. Cys269 and Cys316 are disulfide-bonded. Residues 322–326 (WSEWS) carry the WSXWS motif motif. The chain crosses the membrane as a helical span at residues 344 to 363 (FWLPFGFILILVIFVTGLLL). Residues 364-380 (RKPNTYPKMIPEFFCDT) lie on the Cytoplasmic side of the membrane.

This sequence belongs to the type I cytokine receptor family. Type 5 subfamily. As to quaternary structure, interacts with IL4RA. Interacts with high affinity to interleukin-13 (IL13), but not to interleukin-4 (IL4). Post-translationally, cleaved by MMP8 leading to a soluble form that is also able to interact with IL13.

Its subcellular location is the cell membrane. Its function is as follows. Cell surface receptor that plays a role in the regulation of IL-13-mediated responses. Functions as a decoy receptor that inhibits IL-13- and IL-4-mediated signal transduction via the JAK-STAT pathway and thereby modulates immune responses and inflammation. Serves as a functional signaling receptor for IL-13 in an alternative pathway involving AP-1 ultimately leading to the production of TGFB1. The protein is Interleukin-13 receptor subunit alpha-2 (IL13RA2) of Homo sapiens (Human).